Consider the following 259-residue polypeptide: Proteasome subunit alpha (259 aa).

Belongs to the peptidase T1A family. As to quaternary structure, the 20S proteasome core is composed of 14 alpha and 14 beta subunits that assemble into four stacked heptameric rings, resulting in a barrel-shaped structure. The two inner rings, each composed of seven catalytic beta subunits, are sandwiched by two outer rings, each composed of seven alpha subunits. The catalytic chamber with the active sites is on the inside of the barrel. Has a gated structure, the ends of the cylinder being occluded by the N-termini of the alpha-subunits. Is capped at one or both ends by the proteasome regulatory ATPase, PAN.

It localises to the cytoplasm. The formation of the proteasomal ATPase PAN-20S proteasome complex, via the docking of the C-termini of PAN into the intersubunit pockets in the alpha-rings, triggers opening of the gate for substrate entry. Interconversion between the open-gate and close-gate conformations leads to a dynamic regulation of the 20S proteasome proteolysis activity. Functionally, component of the proteasome core, a large protease complex with broad specificity involved in protein degradation. This is Proteasome subunit alpha from Methanococcus maripaludis (strain C6 / ATCC BAA-1332).